Consider the following 617-residue polypeptide: DNA double-strand break repair protein Mre11 (617 aa).

Mn(2+)-binding residues include Asp-12, His-14, Asp-53, and Asn-88. Catalysis depends on His-89, which acts as the Proton donor. Residues His-158, Asp-189, and His-191 each contribute to the Mn(2+) site. The span at 395–432 (SPVDPSSSVSSIESSGSVSPIDSVSTVSPSSPSSSAII) shows a compositional bias: low complexity. Disordered regions lie at residues 395 to 437 (SPVD…EPEE) and 513 to 617 (VEDE…GDYL). Over residues 529 to 547 (APQSSSPVSFSDNSQTGFS) the composition is skewed to polar residues. Residues 549–559 (ISPPESIPSPE) show a composition bias toward low complexity. A compositionally biased stretch (basic and acidic residues) spans 560-583 (ILKENSEADADEKPVDGKLSEEKP).

The protein belongs to the MRE11/RAD32 family. As to quaternary structure, homodimer. Forms a heterotetramer composed of two Mre11 subunits and two Rad50 subunits. Requires Mn(2+) as cofactor.

Its activity is regulated as follows. Nuclease activity is regulated by Rad50. Its function is as follows. Part of the Rad50/Mre11 complex, which is involved in the early steps of DNA double-strand break (DSB) repair. The complex may facilitate opening of the processed DNA ends to aid in the recruitment of HerA and NurA. Mre11 binds to DSB ends and has both double-stranded 3'-5' exonuclease activity and single-stranded endonuclease activity. This is DNA double-strand break repair protein Mre11 from Methanosarcina mazei (strain ATCC BAA-159 / DSM 3647 / Goe1 / Go1 / JCM 11833 / OCM 88) (Methanosarcina frisia).